The chain runs to 772 residues: Semaphorin-3A (772 aa).

Positions 1-20 (MGWFTGIACLFWGVLLTARA) are cleaved as a signal peptide. The 484-residue stretch at 31–514 (RLKLSYKEML…STAGVAQLPL (484 aa)) folds into the Sema domain. The N-linked (GlcNAc...) asparagine glycan is linked to Asn53. Cys103 and Cys114 are disulfide-bonded. Asn125 is a glycosylation site (N-linked (GlcNAc...) asparagine). Intrachain disulfides connect Cys132–Cys141, Cys269–Cys381, Cys293–Cys341, and Cys517–Cys535. Residues 579-665 (PSLEERIIYG…GFMQTLLKVT (87 aa)) form the Ig-like C2-type domain. N-linked (GlcNAc...) asparagine glycosylation is present at Asn591. Cys650 and Cys723 are joined by a disulfide. Residues 729-738 (RDRKQRRQRP) are compositionally biased toward basic residues. Residues 729-772 (RDRKQRRQRPGHSQGSSNKWKHMQESKKGRNRRTHEFERAPRSV) form a disordered region. Positions 750–772 (HMQESKKGRNRRTHEFERAPRSV) are enriched in basic and acidic residues.

Belongs to the semaphorin family. In terms of assembly, interacts with PXND1.

The protein resides in the secreted. In terms of biological role, plays a role in growth cones guidance. May function to pattern sensory projections by selectively repelling axons that normally terminate dorsally. Involved in the development of the olfactory system and in neuronal control of puberty. The chain is Semaphorin-3A (Sema3a) from Mus musculus (Mouse).